The following is a 278-amino-acid chain: Orotidine 5'-phosphate decarboxylase (278 aa).

Residues aspartate 40, 65-67 (KTH), 96-105 (DRKFIDIGNT), tyrosine 230, and arginine 248 contribute to the substrate site. The Proton donor role is filled by lysine 98.

Belongs to the OMP decarboxylase family.

The enzyme catalyses orotidine 5'-phosphate + H(+) = UMP + CO2. It functions in the pathway pyrimidine metabolism; UMP biosynthesis via de novo pathway; UMP from orotate: step 2/2. This chain is Orotidine 5'-phosphate decarboxylase (pyrG), found in Penicillium chrysogenum (Penicillium notatum).